A 473-amino-acid polypeptide reads, in one-letter code: Anthocyanidin-3-O-glucoside rhamnosyltransferase (473 aa).

This sequence belongs to the UDP-glycosyltransferase family. Expressed in petals, styles and anthers.

Its pathway is pigment biosynthesis; anthocyanin biosynthesis. In terms of biological role, controls the rhamnosylation of reddish anthocyanidin-3-O-glucosides, which is the first step in a series of modifications that finally yield magenta or blue/purple coloured anthocyanins. Controls the conversion of anthocyanidin-3-O-glucosides to anthocyanidin-3-O-rutinosides. This chain is Anthocyanidin-3-O-glucoside rhamnosyltransferase, found in Petunia hybrida (Petunia).